The sequence spans 539 residues: G protein-coupled receptor associated sorting protein 3 (539 aa).

Residues 1-10 (MTGSKNKARA) are compositionally biased toward basic residues. Disordered regions lie at residues 1 to 111 (MTGS…DSWF) and 132 to 170 (NSVA…EEEE). Basic and acidic residues-rich tracts occupy residues 66-80 (VVAE…ESKA) and 88-106 (FNHK…DKPS). The span at 132–146 (NSVAKCENKPSTSIQ) shows a compositional bias: polar residues.

It belongs to the GPRASP family. Homodimer.

It is found in the cytoplasm. The protein resides in the nucleus. In terms of biological role, survival and differentiation promoting protein that plays a role in the regulation of neurosynaptogenesis. Induces phosphatase PP2A activity which results in APP dephosphorylation and inhibits BACE1-mediated processing of APP. The sequence is that of G protein-coupled receptor associated sorting protein 3 (Gprasp3) from Rattus norvegicus (Rat).